Consider the following 922-residue polypeptide: Disintegrin and metalloproteinase domain-containing protein 10 homolog (922 aa).

The N-terminal stretch at 1 to 26 is a signal peptide; that stretch reads MSSPIRNRLQLVVTLIFCLFFENVNG. Residues 27–228 constitute a propeptide that is removed on maturation; it reads LNNFIDNFET…YMTMGGRSKR (202 aa). N-linked (GlcNAc...) asparagine glycans are attached at residues asparagine 74, asparagine 185, and asparagine 346. At 229–745 the chain is on the extracellular side; that stretch reads ANTLRDHDGL…ETLTQWAQDN (517 aa). In terms of domain architecture, Peptidase M12B spans 242–480; that stretch reads RTCSLYMQAD…CSVKNISAVL (239 aa). Histidine 426 contributes to the Zn(2+) binding site. The active site involves glutamate 427. Zn(2+) is bound by residues histidine 430 and histidine 436. Cysteines 442 and 471 form a disulfide. The N-linked (GlcNAc...) asparagine glycan is linked to asparagine 475. In terms of domain architecture, Disintegrin spans 511–615; it reads SAFCGNQIYE…QCPVSPPKHD (105 aa). 5 disulfides stabilise this stretch: cysteine 542/cysteine 577, cysteine 564/cysteine 572, cysteine 588/cysteine 607, cysteine 594/cysteine 626, and cysteine 619/cysteine 631. A glycan (N-linked (GlcNAc...) asparagine) is linked at asparagine 632. 4 disulfide bridges follow: cysteine 636-cysteine 659, cysteine 644-cysteine 665, cysteine 655-cysteine 707, and cysteine 700-cysteine 713. N-linked (GlcNAc...) asparagine glycosylation is present at asparagine 677. The chain crosses the membrane as a helical span at residues 746–766; it reads WWVVGVGGLVFLVIMALFVKC. The Cytoplasmic segment spans residues 767 to 922; it reads CAVHTPSTNP…SGNGGKKKGK (156 aa). 2 disordered regions span residues 797–837 and 864–922; these read QHRQ…PSAP and PGSS…KKGK. Low complexity predominate over residues 805 to 834; that stretch reads AAGSVPPGPGAQPRSGAASAPSRTTPSARP.

May interact with tetraspanin tsp-12; the interaction promotes sup-17 cell membrane localization. The cofactor is Zn(2+). In terms of tissue distribution, expressed in the germline.

Its subcellular location is the cell membrane. The protein resides in the basolateral cell membrane. It localises to the cytoplasmic vesicle membrane. It carries out the reaction Endopeptidase of broad specificity.. Functionally, metalloprotease. Acts together with protease adm-4 and in a cell autonomous manner to facilitate lin-12/Notch signaling during developmental cell fate decision, including anchor cell/ventral uterine precursor cell decision and vulva precursor cell specification. By modulating glp-1/Notch signaling, plays a role in germline development. Probably by modulating BMP-like Sma/Mab signaling via the shedding of unc-40 ectodomain, involved in the regulation of body size and mesoderm development. Probably by shedding ephrin efn-4, regulates axon guidance of SDQL neuron during development. This chain is Disintegrin and metalloproteinase domain-containing protein 10 homolog, found in Caenorhabditis elegans.